The sequence spans 96 residues: uncharacterized protein (96 aa).

A signal peptide spans 1–15 (MRLFILLVALFVICA).

This is an uncharacterized protein from Caenorhabditis elegans.